Reading from the N-terminus, the 406-residue chain is Cysteine desulfurase (406 aa).

Lysine 226 bears the N6-(pyridoxal phosphate)lysine mark. Cysteine 364 functions as the Cysteine persulfide intermediate in the catalytic mechanism.

The protein belongs to the class-V pyridoxal-phosphate-dependent aminotransferase family. Csd subfamily. In terms of assembly, homodimer. Interacts with SufE and the SufBCD complex composed of SufB, SufC and SufD. The interaction with SufE is required to mediate the direct transfer of the sulfur atom from the S-sulfanylcysteine. It depends on pyridoxal 5'-phosphate as a cofactor.

The protein resides in the cytoplasm. The enzyme catalyses (sulfur carrier)-H + L-cysteine = (sulfur carrier)-SH + L-alanine. It catalyses the reaction L-selenocysteine + AH2 = hydrogenselenide + L-alanine + A + H(+). It participates in cofactor biosynthesis; iron-sulfur cluster biosynthesis. Its function is as follows. Cysteine desulfurases mobilize the sulfur from L-cysteine to yield L-alanine, an essential step in sulfur metabolism for biosynthesis of a variety of sulfur-containing biomolecules. Component of the suf operon, which is activated and required under specific conditions such as oxidative stress and iron limitation. Acts as a potent selenocysteine lyase in vitro, that mobilizes selenium from L-selenocysteine. Selenocysteine lyase activity is however unsure in vivo. This is Cysteine desulfurase (sufS) from Shigella flexneri.